The chain runs to 298 residues: Movement protein BC1 (298 aa).

The interval 253–273 (LPEASLDPGDSVSQTQSMTKK) is disordered.

Belongs to the begomovirus movement protein BC1 family. Binds to dimeric supercoiled plasmid DNA. Post-translationally, phosphorylated.

Its subcellular location is the host cell membrane. It localises to the host microsome membrane. The protein resides in the host endoplasmic reticulum membrane. In terms of biological role, transports viral genome to neighboring plant cells directly through plasmosdesmata, without any budding. The movement protein allows efficient cell to cell propagation, by bypassing the host cell wall barrier. Begomovirus genome is shuttled out of nucleus by Nuclear shuttle protein (NSP) and the movement protein transports the DNA-NSP complex to cell plasmodesmata and facilitates further movement across the cell wall. This is Movement protein BC1 from Hewittia sublobata (Coralbush).